The sequence spans 132 residues: Ribosome-binding factor A (132 aa).

It belongs to the RbfA family. Monomer. Binds 30S ribosomal subunits, but not 50S ribosomal subunits or 70S ribosomes.

The protein resides in the cytoplasm. In terms of biological role, one of several proteins that assist in the late maturation steps of the functional core of the 30S ribosomal subunit. Associates with free 30S ribosomal subunits (but not with 30S subunits that are part of 70S ribosomes or polysomes). Required for efficient processing of 16S rRNA. May interact with the 5'-terminal helix region of 16S rRNA. This Pseudomonas putida (strain W619) protein is Ribosome-binding factor A.